A 422-amino-acid chain; its full sequence is Serine/threonine-protein kinase H1 homolog (422 aa).

A disordered region spans residues Phe-35–Lys-80. Over residues Gly-46–Gln-62 the composition is skewed to polar residues. The Protein kinase domain occupies Tyr-96–Ile-353. ATP contacts are provided by residues Ile-102–Val-110 and Lys-125. Asp-216 (proton acceptor) is an active-site residue. Residues Arg-376–Gly-422 are disordered. Low complexity predominate over residues Thr-384–Thr-396. The segment covering Arg-405–Arg-414 has biased composition (basic and acidic residues).

Belongs to the protein kinase superfamily. CAMK Ser/Thr protein kinase family.

It catalyses the reaction L-seryl-[protein] + ATP = O-phospho-L-seryl-[protein] + ADP + H(+). The catalysed reaction is L-threonyl-[protein] + ATP = O-phospho-L-threonyl-[protein] + ADP + H(+). The protein is Serine/threonine-protein kinase H1 homolog (pskh1) of Danio rerio (Zebrafish).